Here is a 308-residue protein sequence, read N- to C-terminus: 34.2 kDa protein in rubredoxin operon (308 aa).

A disulfide bond links Cys136 and Cys139. 268–278 (TNIKGVFAAGD) serves as a coordination point for FAD.

The protein belongs to the class-II pyridine nucleotide-disulfide oxidoreductase family.

The chain is 34.2 kDa protein in rubredoxin operon from Clostridium pasteurianum.